The sequence spans 260 residues: Small ribosomal subunit protein uS2 (260 aa).

Residues 223 to 260 (EGRQGEDEEEASQEVAEGVSKDSLEDLKKSVEEGSNEE) form a disordered region. Positions 241 to 254 (VSKDSLEDLKKSVE) are enriched in basic and acidic residues.

It belongs to the universal ribosomal protein uS2 family.

This is Small ribosomal subunit protein uS2 from Pediococcus pentosaceus (strain ATCC 25745 / CCUG 21536 / LMG 10740 / 183-1w).